The chain runs to 150 residues: Cytochrome c oxidase subunit 5A, mitochondrial (150 aa).

A mitochondrion-targeting transit peptide spans 1–41 (MLGAALRRCAVAATARAGPRGLLHSAPTPGPAAAIQSVRCY). The SIFI-degron motif lies at 2 to 17 (LGAALRRCAVAATARA). Residues Lys-87 and Lys-113 each carry the N6-acetyllysine modification. The residue at position 141 (Thr-141) is a Phosphothreonine.

The protein belongs to the cytochrome c oxidase subunit 5A family. Component of the cytochrome c oxidase (complex IV, CIV), a multisubunit enzyme composed of 14 subunits. The complex is composed of a catalytic core of 3 subunits MT-CO1, MT-CO2 and MT-CO3, encoded in the mitochondrial DNA, and 11 supernumerary subunits COX4I, COX5A, COX5B, COX6A, COX6B, COX6C, COX7A, COX7B, COX7C, COX8 and NDUFA4, which are encoded in the nuclear genome. The complex exists as a monomer or a dimer and forms supercomplexes (SCs) in the inner mitochondrial membrane with NADH-ubiquinone oxidoreductase (complex I, CI) and ubiquinol-cytochrome c oxidoreductase (cytochrome b-c1 complex, complex III, CIII), resulting in different assemblies (supercomplex SCI(1)III(2)IV(1) and megacomplex MCI(2)III(2)IV(2)). Interacts with AFG1L. Interacts with RAB5IF. In response to mitochondrial stress, the precursor protein is ubiquitinated by the SIFI complex in the cytoplasm before mitochondrial import, leading to its degradation. Within the SIFI complex, UBR4 initiates ubiquitin chain that are further elongated or branched by KCMF1.

It is found in the mitochondrion inner membrane. Its pathway is energy metabolism; oxidative phosphorylation. Functionally, component of the cytochrome c oxidase, the last enzyme in the mitochondrial electron transport chain which drives oxidative phosphorylation. The respiratory chain contains 3 multisubunit complexes succinate dehydrogenase (complex II, CII), ubiquinol-cytochrome c oxidoreductase (cytochrome b-c1 complex, complex III, CIII) and cytochrome c oxidase (complex IV, CIV), that cooperate to transfer electrons derived from NADH and succinate to molecular oxygen, creating an electrochemical gradient over the inner membrane that drives transmembrane transport and the ATP synthase. Cytochrome c oxidase is the component of the respiratory chain that catalyzes the reduction of oxygen to water. Electrons originating from reduced cytochrome c in the intermembrane space (IMS) are transferred via the dinuclear copper A center (CU(A)) of subunit 2 and heme A of subunit 1 to the active site in subunit 1, a binuclear center (BNC) formed by heme A3 and copper B (CU(B)). The BNC reduces molecular oxygen to 2 water molecules using 4 electrons from cytochrome c in the IMS and 4 protons from the mitochondrial matrix. This chain is Cytochrome c oxidase subunit 5A, mitochondrial (COX5A), found in Cebuella pygmaea (Pygmy marmoset).